An 84-amino-acid polypeptide reads, in one-letter code: Xenoxin-1 (84 aa).

The first 18 residues, 1-18 (MRYAIVFFLVCVITLGEA), serve as a signal peptide directing secretion. 4 disulfide bridges follow: Cys-21/Cys-42, Cys-35/Cys-55, Cys-61/Cys-76, and Cys-77/Cys-82.

Expressed by the skin dorsal glands.

The protein resides in the secreted. Functionally, lacks alpha-neurotoxic activity, has apparently no antibacterial activity, nor anti-coagulant potency. This is Xenoxin-1 (xenoxin-1) from Xenopus laevis (African clawed frog).